Reading from the N-terminus, the 368-residue chain is Phosphate acyltransferase (368 aa).

The tract at residues 337–368 (LGEGEHNAGGAGHASPAAGHHAEPSAAQSSKA) is disordered. Over residues 349–368 (HASPAAGHHAEPSAAQSSKA) the composition is skewed to low complexity.

The protein belongs to the PlsX family. In terms of assembly, homodimer. Probably interacts with PlsY.

It is found in the cytoplasm. It catalyses the reaction a fatty acyl-[ACP] + phosphate = an acyl phosphate + holo-[ACP]. It functions in the pathway lipid metabolism; phospholipid metabolism. Catalyzes the reversible formation of acyl-phosphate (acyl-PO(4)) from acyl-[acyl-carrier-protein] (acyl-ACP). This enzyme utilizes acyl-ACP as fatty acyl donor, but not acyl-CoA. The sequence is that of Phosphate acyltransferase from Burkholderia lata (strain ATCC 17760 / DSM 23089 / LMG 22485 / NCIMB 9086 / R18194 / 383).